The sequence spans 99 residues: MDDLKIILEFSAGAELLFGNIKRRQLFLDGHKKWTIANLLKWMHANILTERPELFLQGDTVRPGILVLINDTDWELLGELDYELQANDNVLFISTLHGG.

Residue G99 is modified to 1-thioglycine. G99 participates in a covalent cross-link: Glycyl lysine isopeptide (Gly-Lys) (interchain with K-? in acceptor proteins).

It belongs to the URM1 family. Interacts with cer. In terms of processing, C-terminal thiocarboxylation occurs in 2 steps, it is first acyl-adenylated (-COAMP) via the hesA/moeB/thiF part of the MOCS3 homolog, then thiocarboxylated (-COSH) via the rhodanese domain of the MOCS3 homolog.

The protein localises to the cytoplasm. It functions in the pathway tRNA modification; 5-methoxycarbonylmethyl-2-thiouridine-tRNA biosynthesis. In terms of biological role, acts as a sulfur carrier required for 2-thiolation of mcm(5)S(2)U at tRNA wobble positions of cytosolic tRNA(Lys), tRNA(Glu) and tRNA(Gln). Serves as sulfur donor in tRNA 2-thiolation reaction by being thiocarboxylated (-COSH) at its C-terminus by MOCS3. The sulfur is then transferred to tRNA to form 2-thiolation of mcm(5)S(2)U. Also acts as a ubiquitin-like protein (UBL) that is covalently conjugated via an isopeptide bond to lysine residues of target proteins such as Prx2/Jafrac1, Ciao1, Eip71CD and GILT1. The thiocarboxylated form serves as substrate for conjugation and oxidative stress specifically induces the formation of UBL-protein conjugates. This is Ubiquitin-related modifier 1 homolog from Drosophila persimilis (Fruit fly).